Here is a 374-residue protein sequence, read N- to C-terminus: Putative phosphoserine aminotransferase (374 aa).

Arg48 is an L-glutamate binding site. Pyridoxal 5'-phosphate contacts are provided by residues 82–83 (AT), Phe106, Thr152, Asp174, and Gln197. Residue Lys198 is modified to N6-(pyridoxal phosphate)lysine. Pyridoxal 5'-phosphate is bound at residue 249–250 (NT).

This sequence belongs to the class-V pyridoxal-phosphate-dependent aminotransferase family. SerC subfamily. As to quaternary structure, homodimer. The cofactor is pyridoxal 5'-phosphate.

It localises to the cytoplasm. The catalysed reaction is O-phospho-L-serine + 2-oxoglutarate = 3-phosphooxypyruvate + L-glutamate. The enzyme catalyses 4-(phosphooxy)-L-threonine + 2-oxoglutarate = (R)-3-hydroxy-2-oxo-4-phosphooxybutanoate + L-glutamate. Its pathway is amino-acid biosynthesis; L-serine biosynthesis; L-serine from 3-phospho-D-glycerate: step 2/3. It participates in cofactor biosynthesis; pyridoxine 5'-phosphate biosynthesis; pyridoxine 5'-phosphate from D-erythrose 4-phosphate: step 3/5. Its function is as follows. Catalyzes the reversible conversion of 3-phosphohydroxypyruvate to phosphoserine and of 3-hydroxy-2-oxo-4-phosphonooxybutanoate to phosphohydroxythreonine. In Mycolicibacterium paratuberculosis (strain ATCC BAA-968 / K-10) (Mycobacterium paratuberculosis), this protein is Putative phosphoserine aminotransferase.